We begin with the raw amino-acid sequence, 173 residues long: Competence protein C (173 aa).

Its function is as follows. Involved in transformation (genetic competence for DNA uptake). This Haemophilus influenzae (strain ATCC 51907 / DSM 11121 / KW20 / Rd) protein is Competence protein C (comC).